The primary structure comprises 299 residues: MAEFPASLLILNGKSTDNLPLREAIMLLREEGMTIHVRVTWEKGDAARYVEEARKLGVATVIAGGGDGTINEVSTALIQCEGDDIPALGILPLGTANDFATSVGIPEALDKALKLAIAGDAIAIDMAQVNKQTCFINMATGGFGTRITTETPEKLKAALGSVSYIIHGLMRMDTLQPDRCEIRGENFHWQGDALVIGIGNGRQAGGGQQLCPNALINDGLLQLRIFTGDEILPALVSTLKSDEDNPNIIEGASSWFDIQAPHDITFNLDGEPLSGQNFHIEILPAALRCRLPPDCPLLR.

In terms of domain architecture, DAGKc spans 2-133; sequence AEFPASLLIL…IDMAQVNKQT (132 aa). ATP is bound by residues threonine 40, 66–72, and threonine 95; that span reads GDGTINE. 3 residues coordinate Mg(2+): leucine 215, aspartate 218, and leucine 220. Glutamate 271 serves as the catalytic Proton acceptor.

This sequence belongs to the diacylglycerol/lipid kinase family. YegS lipid kinase subfamily. Requires Mg(2+) as cofactor. Ca(2+) is required as a cofactor.

The protein resides in the cytoplasm. In terms of biological role, probably phosphorylates lipids; the in vivo substrate is unknown. The protein is Probable lipid kinase YegS of Escherichia coli O9:H4 (strain HS).